The chain runs to 198 residues: Transcription factor FapR (198 aa).

The region spanning 102 to 168 (TRIARGHHLF…GRTVVDVNSY (67 aa)) is the MaoC-like domain.

The protein belongs to the FapR family.

Transcriptional factor involved in regulation of membrane lipid biosynthesis by repressing genes involved in fatty acid and phospholipid metabolism. The protein is Transcription factor FapR of Geobacillus thermodenitrificans (strain NG80-2).